We begin with the raw amino-acid sequence, 532 residues long: Monolignol oxidoreductase AtBBE-like 15 (532 aa).

A signal peptide spans 1–27 (MAFAISKRNATLFLVTLLLISVPLSSS). Cysteines 36 and 100 form a disulfide. The N-linked (GlcNAc...) asparagine glycan is linked to N57. Residues 76–254 (TPSNPKPVFI…LAWKIKLVPV (179 aa)) enclose the FAD-binding PCMH-type domain. Positions 115–179 (HDYEGLSFVA…QTHGFPAGLC (65 aa)) form a cross-link, 6-(S-cysteinyl)-8alpha-(pros-histidyl)-FAD (His-Cys). N306 and N431 each carry an N-linked (GlcNAc...) asparagine glycan.

It belongs to the oxygen-dependent FAD-linked oxidoreductase family. The cofactor is FAD. In terms of processing, the FAD cofactor is bound via a bicovalent 6-S-cysteinyl, 8alpha-N1-histidyl FAD linkage. Expressed in sepals and stamen.

The protein resides in the secreted. The protein localises to the cell wall. It carries out the reaction (E)-4-coumaroyl alcohol + A = (E)-4-coumaraldehyde + AH2. The enzyme catalyses (E)-coniferol + A = (E)-coniferaldehyde + AH2. It catalyses the reaction (E)-sinapyl alcohol + A = (E)-sinapaldehyde + AH2. The catalysed reaction is 4-O-(beta-D-glucosyl)-(E)-coniferol + A = 4-O-(beta-D-glucosyl)-4-(E)-coniferyl aldehyde + AH2. Functionally, required for endosperm development and polar nuclei fusion. Mediates oxidation of p-hydroxylated derivatives of cinnamyl alcohol (i.e. the monolignols p-coumaryl-, coniferyl-, and sinapyl alcohol) to their corresponding aldehydes. Can also use the beta-O-glycosylated form of coniferyl alcohol (coniferin) as substrate, but is much less efficient towards cinnamyl alcohol. The electron acceptor required for these reactions is not known, but does not seem to be dioxygen. This is Monolignol oxidoreductase AtBBE-like 15 from Arabidopsis thaliana (Mouse-ear cress).